The chain runs to 70 residues: Translational regulator CsrA (70 aa).

Belongs to the CsrA/RsmA family. In terms of assembly, homodimer; the beta-strands of each monomer intercalate to form a hydrophobic core, while the alpha-helices form wings that extend away from the core.

The protein localises to the cytoplasm. Functionally, a translational regulator that binds mRNA to regulate translation initiation and/or mRNA stability. Usually binds in the 5'-UTR at or near the Shine-Dalgarno sequence preventing ribosome-binding, thus repressing translation. Its main target seems to be the major flagellin gene, while its function is anatagonized by FliW. The sequence is that of Translational regulator CsrA from Rhodopirellula baltica (strain DSM 10527 / NCIMB 13988 / SH1).